The primary structure comprises 109 residues: MSSKAKKRVVLPTRPAPPTVEQILEDVRGAPAQDPVFTALAPEDPLEPLPRAEDSEVQQEQIYQQSRTYVAMNERLRQAGDALRQKFDGLRQAGQRLEQDISQVTSATS.

At tyrosine 63 the chain carries Phosphotyrosine.

The protein belongs to the UPF0449 family.

The sequence is that of UPF0449 protein C19orf25 homolog from Rattus norvegicus (Rat).